The sequence spans 70 residues: Large ribosomal subunit protein bL28 (70 aa).

The protein belongs to the bacterial ribosomal protein bL28 family.

The polypeptide is Large ribosomal subunit protein bL28 (Maridesulfovibrio salexigens (strain ATCC 14822 / DSM 2638 / NCIMB 8403 / VKM B-1763) (Desulfovibrio salexigens)).